Here is a 229-residue protein sequence, read N- to C-terminus: Potassium/proton antiporter CemA (229 aa).

4 helical membrane passes run 6–26, 107–127, 152–172, and 190–210; these read AFIPFLYFTSIVFFPWWISLC, IFNFSTNLISFVILSSYSFWG, FLILLLTDLCIGFHSPHGWEL, and LSGLVSTFPVILDTIFKYWIF.

Belongs to the CemA family.

It localises to the plastid. The protein localises to the chloroplast inner membrane. The catalysed reaction is K(+)(in) + H(+)(out) = K(+)(out) + H(+)(in). Contributes to K(+)/H(+) antiport activity by supporting proton efflux to control proton extrusion and homeostasis in chloroplasts in a light-dependent manner to modulate photosynthesis. Prevents excessive induction of non-photochemical quenching (NPQ) under continuous-light conditions. Indirectly promotes efficient inorganic carbon uptake into chloroplasts. The protein is Potassium/proton antiporter CemA of Aethionema cordifolium (Lebanon stonecress).